We begin with the raw amino-acid sequence, 204 residues long: Small ribosomal subunit protein uS7 (204 aa).

Methionine 1 is modified (N-acetylmethionine). An N-acetylthreonine; in 40S ribosomal protein S5, N-terminally processed modification is found at threonine 2. Threonine 14 is subject to Phosphothreonine. Lysine 47 bears the N6-acetyllysine; alternate mark. A Glycyl lysine isopeptide (Lys-Gly) (interchain with G-Cter in SUMO2); alternate cross-link involves residue lysine 47. Position 142 is a phosphoserine (serine 142).

Belongs to the universal ribosomal protein uS7 family. In terms of assembly, component of the small ribosomal subunit. Part of the small subunit (SSU) processome, composed of more than 70 proteins and the RNA chaperone small nucleolar RNA (snoRNA) U3.

It is found in the cytoplasm. The protein localises to the nucleus. It localises to the nucleolus. In terms of biological role, component of the small ribosomal subunit. The ribosome is a large ribonucleoprotein complex responsible for the synthesis of proteins in the cell. Part of the small subunit (SSU) processome, first precursor of the small eukaryotic ribosomal subunit. During the assembly of the SSU processome in the nucleolus, many ribosome biogenesis factors, an RNA chaperone and ribosomal proteins associate with the nascent pre-rRNA and work in concert to generate RNA folding, modifications, rearrangements and cleavage as well as targeted degradation of pre-ribosomal RNA by the RNA exosome. The protein is Small ribosomal subunit protein uS7 (RPS5) of Bos taurus (Bovine).